We begin with the raw amino-acid sequence, 158 residues long: MADPARARRLAKRIGAIVASAIEYEIKDPRLTMVTVTDTRVTNDLHDATVYYTVMGQTLSDEPDFAGAAAALDKAKGVLRTKVGAGTGVRFTPTLTFVLDTMADSARHMEELLDRTRAADAALAEVRQGAVHAGDADPYKESAAEEPAAYEDDERRPD.

Positions 127-158 (RQGAVHAGDADPYKESAAEEPAAYEDDERRPD) are disordered. Residues 134–143 (GDADPYKESA) are compositionally biased toward basic and acidic residues.

The protein belongs to the RbfA family. As to quaternary structure, monomer. Binds 30S ribosomal subunits, but not 50S ribosomal subunits or 70S ribosomes.

It is found in the cytoplasm. One of several proteins that assist in the late maturation steps of the functional core of the 30S ribosomal subunit. Associates with free 30S ribosomal subunits (but not with 30S subunits that are part of 70S ribosomes or polysomes). Required for efficient processing of 16S rRNA. May interact with the 5'-terminal helix region of 16S rRNA. In Mycobacteroides abscessus (strain ATCC 19977 / DSM 44196 / CCUG 20993 / CIP 104536 / JCM 13569 / NCTC 13031 / TMC 1543 / L948) (Mycobacterium abscessus), this protein is Ribosome-binding factor A.